The primary structure comprises 127 residues: Large ribosomal subunit protein bL17 (127 aa).

Belongs to the bacterial ribosomal protein bL17 family. Part of the 50S ribosomal subunit. Contacts protein L32.

The polypeptide is Large ribosomal subunit protein bL17 (Xanthomonas axonopodis pv. citri (strain 306)).